A 247-amino-acid chain; its full sequence is Protein McbF (247 aa).

An ABC transporter domain is found at 6–234 (LEINSLSFSY…NNETTQKRHL (229 aa)). Residue 40–47 (GENPAGKT) coordinates ATP.

It belongs to the ABC transporter superfamily.

Its function is as follows. Together with two further proteins McbE and McbG this protein causes immunity to the peptide antibiotic microcin B17, which inhibits DNA replication in enterobacteriaceae. Immunity is determined by two different mechanisms. McbE is involved in the production of extracellular MccB17 and, in a complex with mcbf it also serves as 'pump' for the export of active MccB17 from the cytoplasm to the periplasmic space. The protein is Protein McbF (mcbF) of Escherichia coli.